The chain runs to 234 residues: tRNA1(Val) (adenine(37)-N6)-methyltransferase (234 aa).

Belongs to the methyltransferase superfamily. tRNA (adenine-N(6)-)-methyltransferase family.

The protein resides in the cytoplasm. The enzyme catalyses adenosine(37) in tRNA1(Val) + S-adenosyl-L-methionine = N(6)-methyladenosine(37) in tRNA1(Val) + S-adenosyl-L-homocysteine + H(+). Its function is as follows. Specifically methylates the adenine in position 37 of tRNA(1)(Val) (anticodon cmo5UAC). This Pedobacter heparinus (strain ATCC 13125 / DSM 2366 / CIP 104194 / JCM 7457 / NBRC 12017 / NCIMB 9290 / NRRL B-14731 / HIM 762-3) protein is tRNA1(Val) (adenine(37)-N6)-methyltransferase.